Reading from the N-terminus, the 392-residue chain is Protein O-glucosyltransferase 1 (392 aa).

The first 23 residues, 1 to 23 (MERLSGCRLRPWMLLLLLFPVQG), serve as a signal peptide directing secretion. 4 disulfides stabilise this stretch: Cys-49-Cys-56, Cys-54-Cys-357, Cys-102-Cys-108, and Cys-263-Cys-286. N-linked (GlcNAc...) asparagine glycosylation occurs at Asn-53. The interval 103-107 (MFPSR) is interaction with the consensus sequence C-X-S-X-[PA]-C in peptide substrates. Asp-133 functions as the Proton donor/acceptor in the catalytic mechanism. Residues 172–178 (AVWPLYP) are interaction with the consensus sequence C-X-S-X-[PA]-C in peptide substrates. Tyr-177 serves as a coordination point for UDP-alpha-D-glucose. N-linked (GlcNAc...) asparagine glycosylation is present at Asn-204. UDP-alpha-D-glucose-binding positions include Ser-212, Arg-218, and 274–279 (VAASFR). N-linked (GlcNAc...) asparagine glycosylation is present at Asn-373. The Prevents secretion from ER motif lies at 389 to 392 (KTEL).

Belongs to the glycosyltransferase 90 family.

The protein localises to the endoplasmic reticulum lumen. It catalyses the reaction L-seryl-[EGF-like domain protein] + UDP-alpha-D-xylose = 3-O-(beta-D-xylosyl)-L-seryl-[EGF-like domain protein] + UDP + H(+). It carries out the reaction L-seryl-[EGF-like domain protein] + UDP-alpha-D-glucose = 3-O-(beta-D-glucosyl)-L-seryl-[EGF-like domain protein] + UDP + H(+). It participates in protein modification; protein glycosylation. Its function is as follows. Dual specificity glycosyltransferase that catalyzes the transfer of glucose and xylose from UDP-glucose and UDP-xylose, respectively, to a serine residue found in the consensus sequence of C-X-S-X-P-C. Specifically targets extracellular EGF repeats of protein such as CRB2, F7, F9 and NOTCH2. Acts as a positive regulator of Notch signaling by mediating O-glucosylation of Notch, leading to regulate muscle development. Notch glucosylation does not affect Notch ligand binding. Required during early development to promote gastrulation: acts by mediating O-glucosylation of CRB2, which is required for CRB2 localization to the cell membrane. The protein is Protein O-glucosyltransferase 1 (Poglut1) of Rattus norvegicus (Rat).